A 618-amino-acid polypeptide reads, in one-letter code: Probable N-acetylgalactosaminyltransferase 6 (618 aa).

The Cytoplasmic segment spans residues 1–16; the sequence is MIASLIRSRRRSRRCV. A helical; Signal-anchor for type II membrane protein membrane pass occupies residues 17–39; sequence VYSVFLFGFLALWGSFALALVFL. Residues 40–618 lie on the Lumenal side of the membrane; that stretch reads SDMYIGEDQI…TEMSWLPEHP (579 aa). N-linked (GlcNAc...) asparagine glycans are attached at residues asparagine 81 and asparagine 149. 2 cysteine pairs are disulfide-bonded: cysteine 147/cysteine 381 and cysteine 372/cysteine 452. A catalytic subdomain A region spans residues 156–267; it reads LPTTSVIIVY…KGWLEPLLTR (112 aa). Substrate-binding residues include aspartate 197 and arginine 228. Aspartate 251 contributes to the Mn(2+) binding site. Serine 252 provides a ligand contact to substrate. Histidine 253 lines the Mn(2+) pocket. The tract at residues 327–389 is catalytic subdomain B; that stretch reads PIESPTMAGG…PCSHVGHVFR (63 aa). Tryptophan 358 is a substrate binding site. Histidine 386 provides a ligand contact to Mn(2+). Arginine 389 is a substrate binding site. One can recognise a Ricin B-type lectin domain in the interval 474-609; that stretch reads RFGRMTSSSN…SNDRQNWTIT (136 aa). N-linked (GlcNAc...) asparagine glycosylation is present at asparagine 483. Intrachain disulfides connect cysteine 487–cysteine 505, cysteine 530–cysteine 550, and cysteine 575–cysteine 597. Residue asparagine 605 is glycosylated (N-linked (GlcNAc...) asparagine).

Belongs to the glycosyltransferase 2 family. GalNAc-T subfamily. The cofactor is Mn(2+).

It localises to the golgi apparatus membrane. It participates in protein modification; protein glycosylation. In terms of biological role, probable glycopeptide transferase involved in O-linked oligosaccharide biosynthesis. Glycopeptide transferases catalyze the transfer of an N-acetyl-D-galactosamine residue to an already glycosylated peptide. In contrast to other members of the family, it does not act as a peptide transferase that transfers GalNAc onto serine or threonine residue on peptides that have been tested. Some peptide transferase activity is however not excluded, considering that its appropriate peptide substrate may remain unidentified. The sequence is that of Probable N-acetylgalactosaminyltransferase 6 (gly-6) from Caenorhabditis elegans.